The following is a 469-amino-acid chain: Serine carboxypeptidase-like 41 (469 aa).

The signal sequence occupies residues 1–20; that stretch reads MAIVSLRDVAMVMVTVQVFA. Cystine bridges form between Cys83–Cys342, Cys243–Cys260, and Cys285–Cys310. Asn134 carries an N-linked (GlcNAc...) asparagine glycan. Residue Ser175 is part of the active site. The N-linked (GlcNAc...) asparagine glycan is linked to Asn255. 2 N-linked (GlcNAc...) asparagine glycosylation sites follow: Asn331 and Asn347. Active-site residues include Asp379 and His436. Asn461 carries N-linked (GlcNAc...) asparagine glycosylation.

The protein belongs to the peptidase S10 family. Expressed in flowers.

It localises to the secreted. Its function is as follows. Probable carboxypeptidase. The polypeptide is Serine carboxypeptidase-like 41 (SCPL41) (Arabidopsis thaliana (Mouse-ear cress)).